Reading from the N-terminus, the 55-residue chain is ATP synthase protein 8 (55 aa).

The helical transmembrane segment at 11 to 31 (LIMFSVTLMLLIVLVINHFML) threads the bilayer.

It belongs to the ATPase protein 8 family. In terms of assembly, F-type ATPases have 2 components, CF(1) - the catalytic core - and CF(0) - the membrane proton channel.

It localises to the mitochondrion membrane. In terms of biological role, mitochondrial membrane ATP synthase (F(1)F(0) ATP synthase or Complex V) produces ATP from ADP in the presence of a proton gradient across the membrane which is generated by electron transport complexes of the respiratory chain. F-type ATPases consist of two structural domains, F(1) - containing the extramembraneous catalytic core and F(0) - containing the membrane proton channel, linked together by a central stalk and a peripheral stalk. During catalysis, ATP synthesis in the catalytic domain of F(1) is coupled via a rotary mechanism of the central stalk subunits to proton translocation. Part of the complex F(0) domain. Minor subunit located with subunit a in the membrane. This Albinaria caerulea (Land snail) protein is ATP synthase protein 8 (MT-ATP8).